The sequence spans 651 residues: Acetyl-coenzyme A synthetase 1 (651 aa).

Residues 191–194, T311, and N335 each bind CoA; that span reads RGGK. ATP contacts are provided by residues 387-389, 411-416, D500, and R515; these read GEP and DTWWQT. S523 lines the CoA pocket. Residue R526 coordinates ATP. Residues V537, H539, and V542 each contribute to the Mg(2+) site. R584 serves as a coordination point for CoA. At K609 the chain carries N6-acetyllysine.

The protein belongs to the ATP-dependent AMP-binding enzyme family. Mg(2+) is required as a cofactor. Acetylated. Deacetylation by the SIR2-homolog deacetylase activates the enzyme.

The enzyme catalyses acetate + ATP + CoA = acetyl-CoA + AMP + diphosphate. Functionally, catalyzes the conversion of acetate into acetyl-CoA (AcCoA), an essential intermediate at the junction of anabolic and catabolic pathways. AcsA undergoes a two-step reaction. In the first half reaction, AcsA combines acetate with ATP to form acetyl-adenylate (AcAMP) intermediate. In the second half reaction, it can then transfer the acetyl group from AcAMP to the sulfhydryl group of CoA, forming the product AcCoA. The chain is Acetyl-coenzyme A synthetase 1 from Pseudomonas aeruginosa (strain ATCC 15692 / DSM 22644 / CIP 104116 / JCM 14847 / LMG 12228 / 1C / PRS 101 / PAO1).